The chain runs to 1467 residues: Neuropathy target esterase sws (1467 aa).

The Lumenal portion of the chain corresponds to 1 to 34 (MDVLEMLRASASGSYNTIFSDAWCQYVSKQITAT). Residues 35 to 55 (MYMYCAFGLMGVLFLAWFMYF) traverse the membrane as a helical segment. The Cytoplasmic segment spans residues 56-1467 (KRLARLRLRD…RSSTYNETKN (1412 aa)). 174–301 (IFGHFEKPIF…IRVIQVIMIR (128 aa)) lines the a nucleoside 3',5'-cyclic phosphate pocket. Disordered stretches follow at residues 332 to 353 (TMSG…ANGP) and 372 to 416 (MGMG…SVHG). The segment covering 339 to 350 (SQTSQSSRQATA) has biased composition (low complexity). 2 positions are modified to phosphoserine: serine 450 and serine 459. A nucleoside 3',5'-cyclic phosphate contacts are provided by residues 488–615 (ELGL…VVRR) and 604–731 (IVLD…LSHR). One can recognise a PNPLA domain in the interval 958-1124 (LVLGGGGARG…VNNLPGHLWR (167 aa)). The GXGXXG signature appears at 962 to 967 (GGGARG). The GXSXG motif lies at 989-993 (GVSIG). The active-site Nucleophile is serine 991. Aspartate 1111 acts as the Proton acceptor in catalysis. The DGA/G motif lies at 1111–1113 (DGG). Serine 1205 carries the phosphoserine modification. The interval 1377-1467 (RKMDKSTQST…RSSTYNETKN (91 aa)) is disordered. Positions 1382-1393 (STQSTPPTSSRA) are enriched in polar residues. Composition is skewed to basic and acidic residues over residues 1396-1406 (RGKEEARHMDN) and 1448-1458 (LADKDEDKENR).

It belongs to the NTE family. In terms of assembly, interacts with Pka-C3; interaction inhibits the catalytic function of Pka-C3 and the esterase activity of sws.

The protein resides in the endoplasmic reticulum membrane. The catalysed reaction is a 1-acyl-sn-glycero-3-phosphocholine + H2O = sn-glycerol 3-phosphocholine + a fatty acid + H(+). In terms of biological role, phospholipase B that deacylates intracellular phosphatidylcholine (PtdCho), generating glycerophosphocholine (GroPtdCho). This deacylation occurs at both sn-2 and sn-1 positions of PtdCho. Its specific chemical modification by certain organophosphorus (OP) compounds leads to distal axonopathy. Plays a role in the signaling mechanism between neurons and glia that regulates glia wrapping during development of the adult brain. Essential for membrane lipid homeostasis and cell survival in both neurons and glia of the adult brain. The sequence is that of Neuropathy target esterase sws from Drosophila yakuba (Fruit fly).